The following is a 213-amino-acid chain: Adenylate kinase (213 aa).

ATP is bound at residue 10-15 (GAGKGT). Residues 30-59 (STGNLLRDEVKSKTDLGVDIEKLISNGKFV) form an NMP region. AMP contacts are provided by residues T31, R36, 57-59 (KFV), 85-88 (GYPR), and Q92. Residues 126–162 (GRMTCEKCNMTLNEYFNKEQIELHPCGVEHLKKRKDD) are LID. R127 serves as a coordination point for ATP. Residues R159 and R170 each coordinate AMP. G198 lines the ATP pocket.

The protein belongs to the adenylate kinase family. As to quaternary structure, monomer.

It is found in the cytoplasm. It catalyses the reaction AMP + ATP = 2 ADP. It participates in purine metabolism; AMP biosynthesis via salvage pathway; AMP from ADP: step 1/1. Catalyzes the reversible transfer of the terminal phosphate group between ATP and AMP. Plays an important role in cellular energy homeostasis and in adenine nucleotide metabolism. In Pelagibacter ubique (strain HTCC1062), this protein is Adenylate kinase.